A 321-amino-acid polypeptide reads, in one-letter code: GTP cyclohydrolase FolE2 (321 aa).

This sequence belongs to the GTP cyclohydrolase IV family.

It catalyses the reaction GTP + H2O = 7,8-dihydroneopterin 3'-triphosphate + formate + H(+). It functions in the pathway cofactor biosynthesis; 7,8-dihydroneopterin triphosphate biosynthesis; 7,8-dihydroneopterin triphosphate from GTP: step 1/1. Converts GTP to 7,8-dihydroneopterin triphosphate. The sequence is that of GTP cyclohydrolase FolE2 from Paracoccus denitrificans (strain Pd 1222).